Reading from the N-terminus, the 317-residue chain is Aspartate carbamoyltransferase catalytic subunit (317 aa).

The carbamoyl phosphate site is built by R65 and T66. An L-aspartate-binding site is contributed by K93. The carbamoyl phosphate site is built by R115, H145, and Q148. The L-aspartate site is built by R178 and R233. Carbamoyl phosphate-binding residues include G274 and P275.

Belongs to the aspartate/ornithine carbamoyltransferase superfamily. ATCase family. Heterododecamer (2C3:3R2) of six catalytic PyrB chains organized as two trimers (C3), and six regulatory PyrI chains organized as three dimers (R2).

It carries out the reaction carbamoyl phosphate + L-aspartate = N-carbamoyl-L-aspartate + phosphate + H(+). Its pathway is pyrimidine metabolism; UMP biosynthesis via de novo pathway; (S)-dihydroorotate from bicarbonate: step 2/3. Catalyzes the condensation of carbamoyl phosphate and aspartate to form carbamoyl aspartate and inorganic phosphate, the committed step in the de novo pyrimidine nucleotide biosynthesis pathway. This is Aspartate carbamoyltransferase catalytic subunit from Bordetella parapertussis (strain 12822 / ATCC BAA-587 / NCTC 13253).